The chain runs to 73 residues: Large ribosomal subunit protein bL31 (73 aa).

Positions 16, 18, 38, and 41 each coordinate Zn(2+).

Belongs to the bacterial ribosomal protein bL31 family. Type A subfamily. In terms of assembly, part of the 50S ribosomal subunit. Zn(2+) serves as cofactor.

Binds the 23S rRNA. This is Large ribosomal subunit protein bL31 from Streptomyces avermitilis (strain ATCC 31267 / DSM 46492 / JCM 5070 / NBRC 14893 / NCIMB 12804 / NRRL 8165 / MA-4680).